An 88-amino-acid polypeptide reads, in one-letter code: Pape peptide (88 aa).

Residues 1–22 (MNRKTLLVIFFVTLLIAEEVNS) form the signal peptide. The propeptide occupies 23–45 (FRLGGFLKKIWRSKLVKRLRSKG). Residues 49 to 88 (LKEALAPEPAPEPAPEPAPEAAPEAAPEPAAAAPERRRRR) are disordered. Positions 56–68 (EPAPEPAPEPAPE) are enriched in pro residues. PAPE repeat units follow at residues 57 to 60 (PAPE), 61 to 64 (PAPE), and 65 to 68 (PAPE). Residues 69 to 81 (AAPEAAPEPAAAA) are compositionally biased toward low complexity.

As to expression, expressed by the venom gland.

It is found in the secreted. This is Pape peptide from Tityus serrulatus (Brazilian scorpion).